The chain runs to 375 residues: Phytanoyl-CoA hydroxylase-interacting protein-like (375 aa).

Phosphoserine occurs at positions 11, 12, and 15. A glycan (N-linked (GlcNAc...) asparagine) is linked at Asn-22. At Ser-24 the chain carries Phosphoserine. Residue Asn-36 is glycosylated (N-linked (GlcNAc...) asparagine). Residues 51–160 form the Fibronectin type-III domain; sequence VPHNIKINNI…EIIEFCTADY (110 aa).

This sequence belongs to the PHYHIP family.

May play a role in the development of the central system. This chain is Phytanoyl-CoA hydroxylase-interacting protein-like (Phyhipl), found in Rattus norvegicus (Rat).